The sequence spans 419 residues: UDP-N-acetylglucosamine 1-carboxyvinyltransferase (419 aa).

A phosphoenolpyruvate-binding site is contributed by 22–23; that stretch reads KN. Residue Arg-93 participates in UDP-N-acetyl-alpha-D-glucosamine binding. The active-site Proton donor is Cys-117. Residue Cys-117 is modified to 2-(S-cysteinyl)pyruvic acid O-phosphothioketal. Positions 307 and 329 each coordinate UDP-N-acetyl-alpha-D-glucosamine.

The protein belongs to the EPSP synthase family. MurA subfamily.

The protein resides in the cytoplasm. It catalyses the reaction phosphoenolpyruvate + UDP-N-acetyl-alpha-D-glucosamine = UDP-N-acetyl-3-O-(1-carboxyvinyl)-alpha-D-glucosamine + phosphate. It participates in cell wall biogenesis; peptidoglycan biosynthesis. Functionally, cell wall formation. Adds enolpyruvyl to UDP-N-acetylglucosamine. This chain is UDP-N-acetylglucosamine 1-carboxyvinyltransferase, found in Shewanella sediminis (strain HAW-EB3).